We begin with the raw amino-acid sequence, 142 residues long: Large ribosomal subunit protein uL13 (142 aa).

The protein belongs to the universal ribosomal protein uL13 family. Part of the 50S ribosomal subunit.

Functionally, this protein is one of the early assembly proteins of the 50S ribosomal subunit, although it is not seen to bind rRNA by itself. It is important during the early stages of 50S assembly. In Aeromonas hydrophila subsp. hydrophila (strain ATCC 7966 / DSM 30187 / BCRC 13018 / CCUG 14551 / JCM 1027 / KCTC 2358 / NCIMB 9240 / NCTC 8049), this protein is Large ribosomal subunit protein uL13.